The sequence spans 296 residues: Glycine N-acyltransferase-like protein (296 aa).

An N6-acetyllysine; alternate modification is found at Lys-41. Lys-41 is subject to N6-succinyllysine; alternate. Lys-43 carries the post-translational modification N6-acetyllysine. Lys-48 carries the N6-acetyllysine; alternate modification. Position 48 is an N6-succinyllysine; alternate (Lys-48). N6-acetyllysine is present on residues Lys-80 and Lys-83. N6-acetyllysine; alternate is present on residues Lys-183 and Lys-256. Residues Lys-183 and Lys-256 each carry the N6-succinyllysine; alternate modification.

This sequence belongs to the glycine N-acyltransferase family.

The protein resides in the mitochondrion. The catalysed reaction is an acyl-CoA + glycine = an N-acylglycine + CoA + H(+). In terms of biological role, mitochondrial acyltransferase which transfers the acyl group to the N-terminus of glycine. Can conjugate a multitude of substrates to form a variety of N-acylglycines. In Mus musculus (Mouse), this protein is Glycine N-acyltransferase-like protein (Gm4952).